Reading from the N-terminus, the 196-residue chain is MCIQCIYARRQKRQHAGAPLAHTLRRTAHTRMPLLQEQQAAQERSVAVPGTEGKKAQNLRQLPAARLTYPTSSSTRPSHARETLYPVSGRQDSAFSFSRNTVQANTQKHKISYRNTTVCRDRDGGFMQQYSIKSDPGETSHCSIVSQTEDGYIIRICRDRDGYKKVHEVHIHQSLFDLCRRTGFITAVRQNTDAVA.

Residues 44-80 form a disordered region; that stretch reads RSVAVPGTEGKKAQNLRQLPAARLTYPTSSSTRPSHA.

This is an uncharacterized protein from Treponema pallidum (strain Nichols).